Reading from the N-terminus, the 785-residue chain is Cadherin-7 (785 aa).

Residues 1 to 27 (MKLGKVELCRFLQLIALFLCFSGMNQA) form the signal peptide. Residues 28 to 47 (ELPRSRSKPYFQLGRSRTKR) constitute a propeptide that is removed on maturation. Residues 28 to 607 (ELPRSRSKPY…AYILPAGLST (580 aa)) lie on the Extracellular side of the membrane. 5 consecutive Cadherin domains span residues 49-153 (WVWN…EPKF), 154-262 (LDGP…PPRF), 263-377 (PRRS…PPVF), 378-482 (SSPL…APEF), and 482-599 (FAMD…AEAY). N-linked (GlcNAc...) asparagine glycans are attached at residues asparagine 449 and asparagine 530. The chain crosses the membrane as a helical span at residues 608–628 (GALIAILACVLTLLVLILLIV). The Cytoplasmic portion of the chain corresponds to 629-785 (TMKRRKKEPL…YGNGQESLYS (157 aa)).

Its subcellular location is the cell membrane. Cadherins are calcium-dependent cell adhesion proteins. They preferentially interact with themselves in a homophilic manner in connecting cells; cadherins may thus contribute to the sorting of heterogeneous cell types. The protein is Cadherin-7 (Cdh7) of Rattus norvegicus (Rat).